A 355-amino-acid chain; its full sequence is MKTDPNKEKALNAVLGQIEKQFGKGSIMKLGEDRSMDVETISTGSLSLDVALGAGGLPMGRIVEIYGPESSGKTTLTLEVIAAAQKQGKTCAFIDAEHALDPVYAQKLGVDIDNLLCSQPDTGEQALEICDALTRSGAVDVIIVDSVAALTPKAEIEGEIGDSHMGLAARMMSQAMRKLAGNLKQSNTLLIFINQIRMKIGVMFGNPETTTGGNALKFYASVRLDIRRTGAIKDRDEVIGNETRVKVVKNKIAAPFKQAEFQILYGQGINSTGELVDLGVVHKLIEKSGAWYAYKGSKIGQGRANAGKYLIENPEISDEIETALRSMLLSKGEKVAAGATDTAGDNVDMETGEVF.

Residue 67 to 74 participates in ATP binding; sequence GPESSGKT.

It belongs to the RecA family.

Its subcellular location is the cytoplasm. Its function is as follows. Can catalyze the hydrolysis of ATP in the presence of single-stranded DNA, the ATP-dependent uptake of single-stranded DNA by duplex DNA, and the ATP-dependent hybridization of homologous single-stranded DNAs. It interacts with LexA causing its activation and leading to its autocatalytic cleavage. The chain is Protein RecA from Shewanella piezotolerans (strain WP3 / JCM 13877).